Reading from the N-terminus, the 84-residue chain is Sulfur carrier protein TusA (84 aa).

Cys-19 serves as the catalytic Cysteine persulfide intermediate.

This sequence belongs to the sulfur carrier protein TusA family. As to quaternary structure, interacts with IscS.

It is found in the cytoplasm. It functions in the pathway tRNA modification. Sulfur carrier protein involved in sulfur trafficking in the cell. Part of a sulfur-relay system required for 2-thiolation during synthesis of 2-thiouridine of the modified wobble base 5-methylaminomethyl-2-thiouridine (mnm(5)s(2)U) in tRNA. Interacts with IscS and stimulates its cysteine desulfurase activity. Accepts an activated sulfur from IscS, which is then transferred to TusD, and thus determines the direction of sulfur flow from IscS to 2-thiouridine formation. Also appears to be involved in sulfur transfer for the biosynthesis of molybdopterin. This Yersinia pseudotuberculosis serotype O:1b (strain IP 31758) protein is Sulfur carrier protein TusA.